Consider the following 143-residue polypeptide: Histone H2B.2, sperm (143 aa).

The segment at 1-49 (MPKSPSKSSPRKGSPRKGSPRKGSPKRGGKGAKRAGKGGRRNVVKRRRR) is disordered. Short sequence motifs (SPKK motif) lie at residues 4–7 (SPSK), 9–12 (SPRK), 14–17 (SPRK), 19–22 (SPRK), and 24–27 (SPKR). Over residues 9-49 (SPRKGSPRKGSPRKGSPKRGGKGAKRAGKGGRRNVVKRRRR) the composition is skewed to basic residues. Phosphoserine is present on residues Ser14, Ser19, and Ser24. Ser129 carries an O-linked (GlcNAc) serine glycan. Residue Lys137 forms a Glycyl lysine isopeptide (Lys-Gly) (interchain with G-Cter in ubiquitin) linkage.

The protein belongs to the histone H2B family. The nucleosome is a histone octamer containing two molecules each of H2A, H2B, H3 and H4 assembled in one H3-H4 heterotetramer and two H2A-H2B heterodimers. The octamer wraps approximately 147 bp of DNA. Monoubiquitination of Lys-137 gives a specific tag for epigenetic transcriptional activation and is also prerequisite for histone H3 'Lys-4' and 'Lys-79' methylation. Post-translationally, phosphorylated on SPKK motifs 3, 4 and 5; which may regulate DNA binding. Dephosphorylated during maturation of spermatids to mature sperm and rephosphorylated at fertilization. In terms of processing, glcNAcylation at Ser-129 promotes monoubiquitination of Lys-137. It fluctuates in response to extracellular glucose, and associates with transcribed genes.

The protein resides in the nucleus. It is found in the chromosome. Core component of nucleosome. Nucleosomes wrap and compact DNA into chromatin, limiting DNA accessibility to the cellular machineries which require DNA as a template. Histones thereby play a central role in transcription regulation, DNA repair, DNA replication and chromosomal stability. DNA accessibility is regulated via a complex set of post-translational modifications of histones, also called histone code, and nucleosome remodeling. This Psammechinus miliaris (Green sea urchin) protein is Histone H2B.2, sperm.